We begin with the raw amino-acid sequence, 342 residues long: Succinylglutamate desuccinylase (342 aa).

3 residues coordinate Zn(2+): H63, E66, and H155. The active site involves E219.

It belongs to the AspA/AstE family. Succinylglutamate desuccinylase subfamily. It depends on Zn(2+) as a cofactor.

The enzyme catalyses N-succinyl-L-glutamate + H2O = L-glutamate + succinate. It functions in the pathway amino-acid degradation; L-arginine degradation via AST pathway; L-glutamate and succinate from L-arginine: step 5/5. In terms of biological role, transforms N(2)-succinylglutamate into succinate and glutamate. In Vibrio cholerae serotype O1 (strain ATCC 39541 / Classical Ogawa 395 / O395), this protein is Succinylglutamate desuccinylase.